Consider the following 255-residue polypeptide: Ribonuclease HII (255 aa).

Residues 70-255 (EYIAGVDEVG…FEPVKKILLK (186 aa)) enclose the RNase H type-2 domain. Aspartate 76, glutamate 77, and aspartate 168 together coordinate a divalent metal cation.

This sequence belongs to the RNase HII family. Mn(2+) serves as cofactor. It depends on Mg(2+) as a cofactor.

It is found in the cytoplasm. It catalyses the reaction Endonucleolytic cleavage to 5'-phosphomonoester.. Its function is as follows. Endonuclease that specifically degrades the RNA of RNA-DNA hybrids. The protein is Ribonuclease HII of Ligilactobacillus salivarius (strain UCC118) (Lactobacillus salivarius).